An 804-amino-acid chain; its full sequence is MSLKRKNNAREGTPDEDLEEYSDYSDVDNYGEEDDDSYKPAPRIRINNNKTKAQTTTNSNEARQSGISAMFGQNDFSNLLGLKLDHTARPLWINPIDGRIILEAFSPLAEQAIDFLVTISEPVSRPAFIHEYRITAYSLYAAVSVGLKTEDIIAVLDRLSKTPIPPSIVDFIRACTVSYGKVKLVLKKNRYFIESGDASVLRLLLRDPVIGPLRIDYSTQSSKQKSSKPSNEDNVEDKKDITNDSSKETAEKSSSDELFSAVVGLQEEEDDEDAVHLFEIKHSSVETIKKRCAEIDYPLLEEYDFRNDNINPDLPIDLKPSTQIRPYQEKSLSKMFGNGRARSGIIVLPCGAGKTLVGITAACTIKKSVIVLCTSSVSVMQWRQQFLQWSNIKPDHIAVFTADHKERFHSEAGVVVSTYSMVANTRNRSYDSQKMMDFLTGREWGFILLDEVHVVPAAMFRRVVTTIAAHTKLGLTATLVREDDKIDDLNFLIGPKMYEANWMDLAQKGHIAKVQCAEVWCAMTTEFYNEYLRENSRKRMLLYIMNPKKFQACQFLIDYHEKRGDKIIVFSDNVYALRAYAIKLGKYFIYGGTPQQERMRILENFQYNELVNTIFLSKVGDTSIDLPEATCLIQISSHYGSRRQEAQRLGRILRAKRRNDEGFNAFFYSLVSKDTQEMYYSSKRQAFLIDQGYAFKVITNLKGMENLPNLAYASKAERLELLQEVLLQNEEAADLDDGEDTSFGSRSLSRAPAKAKRSSGSLSTLAGADNMAYVEYNKSANKQLKKDSKEHHALFRKHLYTKRR.

2 disordered regions span residues 1–61 (MSLK…NSNE) and 220–255 (QSSK…KSSS). A compositionally biased stretch (acidic residues) spans 14–36 (PDEDLEEYSDYSDVDNYGEEDDD). Composition is skewed to low complexity over residues 47–60 (NNNK…TNSN) and 220–229 (QSSKQKSSKP). Over residues 236–255 (EDKKDITNDSSKETAEKSSS) the composition is skewed to basic and acidic residues. The region spanning 335 to 497 (MFGNGRARSG…DLNFLIGPKM (163 aa)) is the Helicase ATP-binding domain. ATP is bound at residue 348-355 (LPCGAGKT). The DEVH box signature appears at 450–453 (DEVH). One can recognise a Helicase C-terminal domain in the interval 551 to 705 (QACQFLIDYH…KVITNLKGME (155 aa)). Disordered regions lie at residues 736–761 (DDGE…SSGS) and 782–804 (KQLK…TKRR). Positions 784–793 (LKKDSKEHHA) are enriched in basic and acidic residues. Over residues 794 to 804 (LFRKHLYTKRR) the composition is skewed to basic residues.

This sequence belongs to the helicase family. RAD25/XPB subfamily. As to quaternary structure, component of the 7-subunit TFIIH core complex composed of XPB/ptr8, XPD/rad15, ssl1, tfb1, tfb2, tfb4 and tfb5, which is active in NER. The core complex associates with the 3-subunit CTD-kinase module TFIIK composed of mcs2/cyclin H, mcs6/cdk7 and pmh1/tfb3 to form the 10-subunit holoenzyme (holo-TFIIH) active in transcription.

It is found in the nucleus. It catalyses the reaction Couples ATP hydrolysis with the unwinding of duplex DNA by translocating in the 3'-5' direction.. The catalysed reaction is ATP + H2O = ADP + phosphate + H(+). Probable ATP-dependent 3'-5' DNA helicase/translocase. Binds dsDNA rather than ssDNA, unzipping it in a translocase rather than classical helicase activity. Component of the general transcription and DNA repair factor IIH (TFIIH) core complex. When complexed to CDK-activating kinase (CAK), involved in RNA transcription by RNA polymerase II. Also involved in transcription-coupled nucleotide excision repair (NER) of damaged DNA. In NER, TFIIH acts by opening DNA around the lesion to allow the excision of the damaged oligonucleotide and its replacement by a new DNA fragment. The ATPase activity of XPB/ptr8, but not its helicase activity, is required for DNA opening. In transcription, TFIIH has an essential role in transcription initiation. When the pre-initiation complex (PIC) has been established, TFIIH is required for promoter opening and promoter escape. The ATP-dependent helicase activity of XPB/ptr8 is required for promoter escape but not for promoter opening. Plays a role in mRNA export. This chain is General transcription and DNA repair factor IIH helicase/translocase subunit XPB, found in Schizosaccharomyces pombe (strain 972 / ATCC 24843) (Fission yeast).